Consider the following 240-residue polypeptide: Phosphatidylserine decarboxylase proenzyme (240 aa).

The active-site Schiff-base intermediate with substrate; via pyruvic acid is the Ser209. Residue Ser209 is modified to Pyruvic acid (Ser); by autocatalysis.

It belongs to the phosphatidylserine decarboxylase family. PSD-A subfamily. In terms of assembly, heterodimer of a large membrane-associated beta subunit and a small pyruvoyl-containing alpha subunit. Pyruvate serves as cofactor. Post-translationally, is synthesized initially as an inactive proenzyme. Formation of the active enzyme involves a self-maturation process in which the active site pyruvoyl group is generated from an internal serine residue via an autocatalytic post-translational modification. Two non-identical subunits are generated from the proenzyme in this reaction, and the pyruvate is formed at the N-terminus of the alpha chain, which is derived from the carboxyl end of the proenzyme. The post-translation cleavage follows an unusual pathway, termed non-hydrolytic serinolysis, in which the side chain hydroxyl group of the serine supplies its oxygen atom to form the C-terminus of the beta chain, while the remainder of the serine residue undergoes an oxidative deamination to produce ammonia and the pyruvoyl prosthetic group on the alpha chain.

It is found in the cell membrane. It catalyses the reaction a 1,2-diacyl-sn-glycero-3-phospho-L-serine + H(+) = a 1,2-diacyl-sn-glycero-3-phosphoethanolamine + CO2. It functions in the pathway phospholipid metabolism; phosphatidylethanolamine biosynthesis; phosphatidylethanolamine from CDP-diacylglycerol: step 2/2. In terms of biological role, catalyzes the formation of phosphatidylethanolamine (PtdEtn) from phosphatidylserine (PtdSer). The chain is Phosphatidylserine decarboxylase proenzyme from Mycobacterium avium (strain 104).